Reading from the N-terminus, the 73-residue chain is Conotoxin Lt9a (73 aa).

An N-terminal signal peptide occupies residues 1-23 (MTLTKSAVLILVLLLAFDNFADV). Positions 24–40 (QPGLITMGGGRLSNLLS) are excised as a propeptide. 3 cysteine pairs are disulfide-bonded: cysteine 48–cysteine 62, cysteine 53–cysteine 64, and cysteine 59–cysteine 69.

It belongs to the conotoxin P superfamily. As to expression, expressed by the venom duct.

Its subcellular location is the secreted. Its function is as follows. Probable neurotoxin that inhibits ion channels. The sequence is that of Conotoxin Lt9a from Conus litteratus (Lettered cone).